Reading from the N-terminus, the 1020-residue chain is Mediator of RNA polymerase II transcription subunit 16 (1020 aa).

The protein belongs to the Mediator complex subunit 16 family. As to quaternary structure, component of the Mediator complex.

The protein resides in the nucleus. Component of the Mediator complex, a coactivator involved in the regulated transcription of nearly all RNA polymerase II-dependent genes. Mediator functions as a bridge to convey information from gene-specific regulatory proteins to the basal RNA polymerase II transcription machinery. Mediator is recruited to promoters by direct interactions with regulatory proteins and serves as a scaffold for the assembly of a functional preinitiation complex with RNA polymerase II and the general transcription factors. This is Mediator of RNA polymerase II transcription subunit 16 (SIN4) from Scheffersomyces stipitis (strain ATCC 58785 / CBS 6054 / NBRC 10063 / NRRL Y-11545) (Yeast).